Consider the following 123-residue polypeptide: Large ribosomal subunit protein uL14c (123 aa).

The protein belongs to the universal ribosomal protein uL14 family. Part of the 50S ribosomal subunit. Interacts with IOJAP.

It localises to the plastid. The protein localises to the chloroplast. Its function is as follows. Binds to 23S rRNA. In Zea mays (Maize), this protein is Large ribosomal subunit protein uL14c.